Here is a 73-residue protein sequence, read N- to C-terminus: MKNIFMLTLFILIITSTIKAIGSTNEVDEIKQEDDGLCYEGTNCGKVGKYCCSPIGKYCVCYDSKAICNKNCT.

An N-terminal signal peptide occupies residues 1–20 (MKNIFMLTLFILIITSTIKA). The propeptide occupies 21–33 (IGSTNEVDEIKQE). Disulfide bonds link Cys-38-Cys-68, Cys-44-Cys-59, Cys-51-Cys-61, and Cys-52-Cys-72.

As to quaternary structure, monomer.

This Ambrosia trifida (Giant ragweed) protein is Pollen allergen Amb t 5.